We begin with the raw amino-acid sequence, 248 residues long: PF03932 family protein CutC (248 aa).

It belongs to the CutC family. In terms of assembly, homodimer.

Its subcellular location is the cytoplasm. In Escherichia coli O127:H6 (strain E2348/69 / EPEC), this protein is PF03932 family protein CutC.